The following is a 476-amino-acid chain: Glycogen synthase (476 aa).

Lysine 15 provides a ligand contact to ADP-alpha-D-glucose.

Belongs to the glycosyltransferase 1 family. Bacterial/plant glycogen synthase subfamily.

It catalyses the reaction [(1-&gt;4)-alpha-D-glucosyl](n) + ADP-alpha-D-glucose = [(1-&gt;4)-alpha-D-glucosyl](n+1) + ADP + H(+). It functions in the pathway glycan biosynthesis; glycogen biosynthesis. In terms of biological role, synthesizes alpha-1,4-glucan chains using ADP-glucose. This Bacillus cereus (strain ZK / E33L) protein is Glycogen synthase.